A 259-amino-acid chain; its full sequence is Ribosomal RNA small subunit methyltransferase J (259 aa).

Residues arginine 101–aspartate 102, glutamate 117–arginine 118, serine 153–serine 154, and aspartate 176 each bind S-adenosyl-L-methionine.

The protein belongs to the methyltransferase superfamily. RsmJ family.

It is found in the cytoplasm. It carries out the reaction guanosine(1516) in 16S rRNA + S-adenosyl-L-methionine = N(2)-methylguanosine(1516) in 16S rRNA + S-adenosyl-L-homocysteine + H(+). Functionally, specifically methylates the guanosine in position 1516 of 16S rRNA. The sequence is that of Ribosomal RNA small subunit methyltransferase J from Aliivibrio fischeri (strain ATCC 700601 / ES114) (Vibrio fischeri).